The following is a 675-amino-acid chain: Putative L-type lectin-domain containing receptor kinase I.11 (675 aa).

The signal sequence occupies residues 1–22 (MASERLHLILLVFFNHLTFLLS). Topologically, residues 23–292 (QQEEAGFIYN…PKAKQEQTSP (270 aa)) are extracellular. Residues 27 to 263 (AGFIYNGFGQ…YQYILGWSFS (237 aa)) are legume-lectin like. Residues Asn-60, Asn-129, Asn-186, Asn-209, and Asn-230 are each glycosylated (N-linked (GlcNAc...) asparagine). A helical membrane pass occupies residues 293–313 (LLIVLLMLLVLIMLAVLGGIY). Residues 314–675 (LYRRKKYAEV…THTITYGDGR (362 aa)) lie on the Cytoplasmic side of the membrane. Positions 348–620 (FDKDGRLGKG…QVIQYINQNL (273 aa)) constitute a Protein kinase domain. Residues 354 to 362 (LGKGGFGEV) and Lys-376 contribute to the ATP site. Asp-472 functions as the Proton acceptor in the catalytic mechanism.

In the C-terminal section; belongs to the protein kinase superfamily. Ser/Thr protein kinase family. It in the N-terminal section; belongs to the leguminous lectin family.

The protein localises to the cell membrane. It catalyses the reaction L-seryl-[protein] + ATP = O-phospho-L-seryl-[protein] + ADP + H(+). The catalysed reaction is L-threonyl-[protein] + ATP = O-phospho-L-threonyl-[protein] + ADP + H(+). This chain is Putative L-type lectin-domain containing receptor kinase I.11 (LECRK111), found in Arabidopsis thaliana (Mouse-ear cress).